Here is a 441-residue protein sequence, read N- to C-terminus: Transcriptional regulatory protein ZraR (441 aa).

The Response regulatory domain occupies 7–121 (DILVVDDDVS…RLQETLEKAL (115 aa)). Asp-56 is modified (4-aspartylphosphate). In terms of domain architecture, Sigma-54 factor interaction spans 141–370 (MIGSSPAMQH…LENAIERAVV (230 aa)). 4 residues coordinate ATP: Gly-172, Thr-173, Arg-329, and Arg-359. Positions 421 to 440 (KTEAARQLGITRKTLLAKLS) form a DNA-binding region, H-T-H motif.

In terms of assembly, forms homohexamers in the crystal structure. However, the dimerization interface between DNA-binding domains observed in the crystal structure suggests that dodecamers, rather than hexamers, might be the functionally important oligomer. In terms of processing, phosphorylated by ZraS.

The protein localises to the cytoplasm. With respect to regulation, activity of the ZraS/ZraR two-component system is repressed by the zinc-bound form of ZraP, which probably interacts with the periplasmic region of ZraS. Part of the Zra signaling pathway, an envelope stress response (ESR) system composed of the periplasmic accessory protein ZraP, the histidine kinase ZraS and the transcriptional regulator ZraR. The ZraPSR system contributes to antibiotic resistance and is important for membrane integrity in the presence of membrane-targeting biocides. ZraR is a member of the two-component regulatory system ZraS/ZraR. When activated by ZraS, acts in conjunction with sigma-54 to regulate the expression of zraP in the presence of high Zn(2+) or Pb(2+) concentrations. Also positively autoregulates the expression of the zraSR operon. The sequence is that of Transcriptional regulatory protein ZraR from Salmonella typhimurium (strain LT2 / SGSC1412 / ATCC 700720).